The sequence spans 216 residues: Cobalt-zinc-cadmium resistance protein CzcN (216 aa).

A run of 3 helical transmembrane segments spans residues 27–47 (IGVW…GHSR), 50–70 (GTWV…LATV), and 116–136 (ESLA…PAVI).

The protein to A.xylosoxydans NccN.

It is found in the cell inner membrane. Functionally, component of the CZC cation-efflux system that confers resistance to cobalt, zinc and cadmium. The protein is Cobalt-zinc-cadmium resistance protein CzcN (czcN) of Cupriavidus metallidurans (strain ATCC 43123 / DSM 2839 / NBRC 102507 / CH34) (Ralstonia metallidurans).